The chain runs to 106 residues: UPF0145 protein Athe_0545 (106 aa).

The protein belongs to the UPF0145 family.

The sequence is that of UPF0145 protein Athe_0545 from Caldicellulosiruptor bescii (strain ATCC BAA-1888 / DSM 6725 / KCTC 15123 / Z-1320) (Anaerocellum thermophilum).